The sequence spans 417 residues: MAWLTLYLLSVLWAVAGTSTRAQSSCSVPPDQQPWVDGLQALMENSVTDSDFPNPSILIAMNLAGAYNVEAQKLLTYQLMASDSADLTSGQLALTVMALTSSCRDPGSKVSTLLKKMENWSPSSPGAESSAFYGPGLAILALCQKSSEATLPIAVRFAKTLMMEPSPFNVDTGAVATLALTCMYNKIPVGSQENYRDLFGQALKAIVEKISLRIKADGIIGDIYSTGLAMQALSVTPEQPTKKWDCEKTMHTILNEIKQGKFQNPMSIAQILPSLKGKTYLDVPQVTCGPDHEVPPTLTDYPTPVPTSVSNITVIYTINNQLRGVDLLFNVTIEVSVKSGSVLLAVLEEAQRKNSMFKFETTMTSWGLIVSSINNIAENVNHKTYWEFLSGKTPLDEGVAYYIPFNHEHITANFTQY.

The signal sequence occupies residues 1-18; the sequence is MAWLTLYLLSVLWAVAGT. Intrachain disulfides connect C26/C246, C103/C288, and C143/C182. D171 serves as a coordination point for cob(II)alamin. Position 191 is a phosphoserine (S191). Positions 222 and 270 each coordinate cob(II)alamin. N311 and N330 each carry an N-linked (GlcNAc...) asparagine glycan. Cob(II)alamin is bound by residues 365–370 and 386–395; these read SWGLIV and WEFLSGKTPL. N413 carries N-linked (GlcNAc...) asparagine glycosylation.

The protein belongs to the eukaryotic cobalamin transport proteins family. In terms of assembly, interacts with CUBN (via CUB domains). In terms of tissue distribution, gastric mucosa.

Its subcellular location is the secreted. Its function is as follows. Promotes absorption of the essential vitamin cobalamin (Cbl) in the ileum. After interaction with CUBN, the CBLIF-cobalamin complex is internalized via receptor-mediated endocytosis. In Mus musculus (Mouse), this protein is Cobalamin binding intrinsic factor (Cblif).